The primary structure comprises 272 residues: NAD kinase (272 aa).

Asp50 functions as the Proton acceptor in the catalytic mechanism. NAD(+) contacts are provided by residues 50–51, 126–127, Arg152, Asp154, 165–170, and Ala189; these read DG, NE, and TAYNKS.

The protein belongs to the NAD kinase family. A divalent metal cation serves as cofactor.

The protein resides in the cytoplasm. The catalysed reaction is NAD(+) + ATP = ADP + NADP(+) + H(+). In terms of biological role, involved in the regulation of the intracellular balance of NAD and NADP, and is a key enzyme in the biosynthesis of NADP. Catalyzes specifically the phosphorylation on 2'-hydroxyl of the adenosine moiety of NAD to yield NADP. This is NAD kinase from Streptococcus pneumoniae serotype 19F (strain G54).